Consider the following 386-residue polypeptide: Succinate--CoA ligase [ADP-forming] subunit beta (386 aa).

Positions lysine 9–glutamate 244 constitute an ATP-grasp domain. ATP contacts are provided by residues lysine 46, glycine 53–glycine 55, glutamate 99, cysteine 102, and glutamate 107. 2 residues coordinate Mg(2+): asparagine 199 and aspartate 213. Substrate contacts are provided by residues asparagine 264 and glycine 321–methionine 323.

The protein belongs to the succinate/malate CoA ligase beta subunit family. As to quaternary structure, heterotetramer of two alpha and two beta subunits. Mg(2+) serves as cofactor.

The catalysed reaction is succinate + ATP + CoA = succinyl-CoA + ADP + phosphate. It carries out the reaction GTP + succinate + CoA = succinyl-CoA + GDP + phosphate. It functions in the pathway carbohydrate metabolism; tricarboxylic acid cycle; succinate from succinyl-CoA (ligase route): step 1/1. In terms of biological role, succinyl-CoA synthetase functions in the citric acid cycle (TCA), coupling the hydrolysis of succinyl-CoA to the synthesis of either ATP or GTP and thus represents the only step of substrate-level phosphorylation in the TCA. The beta subunit provides nucleotide specificity of the enzyme and binds the substrate succinate, while the binding sites for coenzyme A and phosphate are found in the alpha subunit. This chain is Succinate--CoA ligase [ADP-forming] subunit beta, found in Geobacillus thermodenitrificans (strain NG80-2).